The chain runs to 192 residues: Thioredoxin-like 3-2, chloroplastic (192 aa).

The transit peptide at 1–55 (MSEIVNLSSSLRSLNPKISPLVPPYRQTSSSFSRPRNFKYHSFTDKICLAAERIR) directs the protein to the chloroplast. Residues 66-191 (LQELDDSPVS…VREMIENDSI (126 aa)) enclose the Thioredoxin domain. Active-site nucleophile residues include Cys110 and Cys113. Cys110 and Cys113 are oxidised to a cystine.

The protein belongs to the thioredoxin family.

It localises to the plastid. The protein localises to the chloroplast stroma. In terms of biological role, probable thiol-disulfide oxidoreductase that may participate in various redox reactions. In Arabidopsis thaliana (Mouse-ear cress), this protein is Thioredoxin-like 3-2, chloroplastic (WCRKC2).